A 286-amino-acid polypeptide reads, in one-letter code: Pantothenate synthetase (286 aa).

30-37 (MGYFHEGH) serves as a coordination point for ATP. Residue H37 is the Proton donor of the active site. Q61 is a binding site for (R)-pantoate. Beta-alanine is bound at residue Q61. Residue 147-150 (GKKD) participates in ATP binding. Q153 contributes to the (R)-pantoate binding site. Position 184–187 (184–187 (MSSR)) interacts with ATP.

The protein belongs to the pantothenate synthetase family. As to quaternary structure, homodimer.

Its subcellular location is the cytoplasm. The catalysed reaction is (R)-pantoate + beta-alanine + ATP = (R)-pantothenate + AMP + diphosphate + H(+). It participates in cofactor biosynthesis; (R)-pantothenate biosynthesis; (R)-pantothenate from (R)-pantoate and beta-alanine: step 1/1. Catalyzes the condensation of pantoate with beta-alanine in an ATP-dependent reaction via a pantoyl-adenylate intermediate. The sequence is that of Pantothenate synthetase from Syntrophus aciditrophicus (strain SB).